A 539-amino-acid polypeptide reads, in one-letter code: Chaperonin GroEL (539 aa).

ATP is bound by residues 29-32 (TLGP), 86-90 (DGTTT), glycine 413, 479-481 (DAL), and aspartate 495.

It belongs to the chaperonin (HSP60) family. Forms a cylinder of 14 subunits composed of two heptameric rings stacked back-to-back. Interacts with the co-chaperonin GroES.

It is found in the cytoplasm. It catalyses the reaction ATP + H2O + a folded polypeptide = ADP + phosphate + an unfolded polypeptide.. Together with its co-chaperonin GroES, plays an essential role in assisting protein folding. The GroEL-GroES system forms a nano-cage that allows encapsulation of the non-native substrate proteins and provides a physical environment optimized to promote and accelerate protein folding. The chain is Chaperonin GroEL from Thermosipho africanus (strain TCF52B).